We begin with the raw amino-acid sequence, 85 residues long: U4-theraphotoxin-Hhn1q (85 aa).

The signal sequence occupies residues 1–22 (MKVTLIAILTCAAVLVLHTTAA). A propeptide spanning residues 23–48 (EELEAESQLMEVGMPDTELAAVDEER) is cleaved from the precursor. Disulfide bonds link Cys52/Cys66, Cys56/Cys77, and Cys71/Cys82.

The protein belongs to the neurotoxin 12 (Hwtx-2) family. 02 (Hwtx-2) subfamily. In terms of tissue distribution, expressed by the venom gland.

It is found in the secreted. Postsynaptic neurotoxin. The chain is U4-theraphotoxin-Hhn1q from Cyriopagopus hainanus (Chinese bird spider).